The primary structure comprises 132 residues: Protein LH2 (132 aa).

This Pantherophis guttatus (Corn snake) protein is Protein LH2.